The following is a 512-amino-acid chain: Maturase K (512 aa).

The protein belongs to the intron maturase 2 family. MatK subfamily.

It is found in the plastid. Its subcellular location is the chloroplast. Its function is as follows. Usually encoded in the trnK tRNA gene intron. Probably assists in splicing its own and other chloroplast group II introns. The polypeptide is Maturase K (Koelreuteria paniculata (Goldenrain tree)).